Here is a 118-residue protein sequence, read N- to C-terminus: Cell division protein FtsB (118 aa).

Residues 1-6 (MRNWRW) are Cytoplasmic-facing. Residues 7–24 (LLLVLAALLSWLQHRFWF) form a helical membrane-spanning segment. At 25–118 (GPGNSGEVRM…DLAQPRREKR (94 aa)) the chain is on the periplasmic side. Residues 30–66 (GEVRMLQVQIVQQHQENERLRQRNASLAAEVKNLKDG) are a coiled coil. Residues 97–118 (PLPNDTSADHGVDLAQPRREKR) form a disordered region. Residues 103–118 (SADHGVDLAQPRREKR) are compositionally biased toward basic and acidic residues.

It belongs to the FtsB family. Part of a complex composed of FtsB, FtsL and FtsQ.

It localises to the cell inner membrane. Essential cell division protein. May link together the upstream cell division proteins, which are predominantly cytoplasmic, with the downstream cell division proteins, which are predominantly periplasmic. The chain is Cell division protein FtsB from Xylella fastidiosa (strain 9a5c).